The chain runs to 243 residues: NAD-dependent protein deacetylase (243 aa).

Residues 1 to 243 (MRNDLETLKH…VSVVKSLMTE (243 aa)) enclose the Deacetylase sirtuin-type domain. The NAD(+) site is built by alanine 24, phenylalanine 35, arginine 36, glutamine 105, isoleucine 107, aspartate 108, and histidine 123. Phenylalanine 35 is a nicotinamide binding site. Nicotinamide-binding residues include isoleucine 107 and aspartate 108. Histidine 123 functions as the Proton acceptor in the catalytic mechanism. Residues cysteine 131, cysteine 134, cysteine 151, and cysteine 154 each coordinate Zn(2+). NAD(+)-binding residues include serine 192, serine 193, asparagine 215, and aspartate 232.

Belongs to the sirtuin family. Class U subfamily. Zn(2+) serves as cofactor.

The protein resides in the cytoplasm. It carries out the reaction N(6)-acetyl-L-lysyl-[protein] + NAD(+) + H2O = 2''-O-acetyl-ADP-D-ribose + nicotinamide + L-lysyl-[protein]. Functionally, NAD-dependent protein deacetylase which modulates the activities of several enzymes which are inactive in their acetylated form. The sequence is that of NAD-dependent protein deacetylase from Staphylococcus aureus (strain Mu50 / ATCC 700699).